The primary structure comprises 206 residues: Large ribosomal subunit protein uL4 (206 aa).

The segment covering 43 to 52 (NKRQGTQSAK) has biased composition (polar residues). The tract at residues 43–86 (NKRQGTQSAKTRAEVSGGGRKPWRQKGTGHARQGSTRSPQWKGG) is disordered.

The protein belongs to the universal ribosomal protein uL4 family. As to quaternary structure, part of the 50S ribosomal subunit.

Its function is as follows. One of the primary rRNA binding proteins, this protein initially binds near the 5'-end of the 23S rRNA. It is important during the early stages of 50S assembly. It makes multiple contacts with different domains of the 23S rRNA in the assembled 50S subunit and ribosome. Functionally, forms part of the polypeptide exit tunnel. The chain is Large ribosomal subunit protein uL4 from Lachnoclostridium phytofermentans (strain ATCC 700394 / DSM 18823 / ISDg) (Clostridium phytofermentans).